The chain runs to 95 residues: Exodeoxyribonuclease 7 small subunit (95 aa).

Positions 62–83 are enriched in basic and acidic residues; sequence LTKDESKKTNKTGFRGESKTTE. Residues 62 to 95 form a disordered region; sequence LTKDESKKTNKTGFRGESKTTETKNNTAQEEDLF.

This sequence belongs to the XseB family. As to quaternary structure, heterooligomer composed of large and small subunits.

It is found in the cytoplasm. The enzyme catalyses Exonucleolytic cleavage in either 5'- to 3'- or 3'- to 5'-direction to yield nucleoside 5'-phosphates.. Bidirectionally degrades single-stranded DNA into large acid-insoluble oligonucleotides, which are then degraded further into small acid-soluble oligonucleotides. This Leptospira interrogans serogroup Icterohaemorrhagiae serovar copenhageni (strain Fiocruz L1-130) protein is Exodeoxyribonuclease 7 small subunit.